A 335-amino-acid polypeptide reads, in one-letter code: Cytoskeleton protein RodZ (335 aa).

Topologically, residues 1 to 111 (MNTEATHDQN…LGKRRKKRDG (111 aa)) are cytoplasmic. The HTH cro/C1-type domain maps to 19 to 71 (LRNAREQLGLSQQAVAERLCLKVSTVRDIEEDKAPADLASTFLRGYIRSYARL). The H-T-H motif DNA-binding region spans 30 to 49 (QQAVAERLCLKVSTVRDIEE). The chain crosses the membrane as a helical; Signal-anchor for type II membrane protein span at residues 112–132 (WLMTFTWLVLFVVIGLSGAWW). At 133–335 (WQDHKAQQEE…TLNAEQSPAQ (203 aa)) the chain is on the periplasmic side. Residues 148–164 (DQSSAELNNNQSQSVPL) show a composition bias toward polar residues. The disordered stretch occupies residues 148–244 (DQSSAELNNN…PLPTDQAGVT (97 aa)). Low complexity-rich tracts occupy residues 165–205 (DTST…DPQQ) and 217–239 (DTAA…LPTD).

This sequence belongs to the RodZ family.

It localises to the cell inner membrane. Its function is as follows. Cytoskeletal protein that is involved in cell-shape control through regulation of the length of the long axis. This chain is Cytoskeleton protein RodZ, found in Escherichia coli O127:H6 (strain E2348/69 / EPEC).